The sequence spans 523 residues: MVLFGVLTMILAIALFSLRIPAIYFNRITIILLLFSALLSYNSLYMNNIGSGVGVFGGLFQVTTITQSIDVFIYLLGALVLLLSEKANRANTLSFNKLNSTLVNKSKGLSVLAEYPLIALFSVLGMSSLISSSDLISMFLSIELQSFAVYILATIYRESESATSAGLKYFLLGSLSSALILLGSSLLYSFTGLTSFEGLYMLCSTTETNTAIEISVLLIMVGLLFKVSAAPFHNWAPDVYDGVPTVVTTWLTTMPKIAFLVFILEFQGFTQLANWSSWTNLLLISSLLSLLIGTIGGLAQYRIKRLLTYSTISHVGFLLLALAINNEESVESFLFYLIQYSLTNINVFFILVAFGYLLGSKGLSIYSPIQLINQLKGQFKVNPLLGLSLAICLFSMAGIPPLVGFFGKQMVLYAATHNGNFFLAFVAILVSVVSAAYYLRIIKVIHFDPVPAPSALSLIKTTEISSDLNVTETNNSLEGSSEELSTSSSLVIATITLLLIFFIINPTPLLNSVHLITLNLFYW.

A run of 14 helical transmembrane segments spans residues 3 to 23 (LFGVLTMILAIALFSLRIPAI), 30 to 50 (IILLLFSALLSYNSLYMNNIG), 62 to 82 (VTTITQSIDVFIYLLGALVLL), 110 to 130 (SVLAEYPLIALFSVLGMSSLI), 135 to 155 (LISMFLSIELQSFAVYILATI), 170 to 190 (FLLGSLSSALILLGSSLLYSF), 212 to 232 (IEISVLLIMVGLLFKVSAAPF), 246 to 266 (VVTTWLTTMPKIAFLVFILEF), 281 to 301 (LLLISSLLSLLIGTIGGLAQY), 306 to 326 (LLTYSTISHVGFLLLALAINN), 333 to 353 (FLFYLIQYSLTNINVFFILVA), 386 to 406 (GLSLAICLFSMAGIPPLVGFF), 419 to 439 (GNFFLAFVAILVSVVSAAYYL), and 490 to 510 (LVIATITLLLIFFIINPTPLL).

It belongs to the complex I subunit 2 family.

The protein localises to the mitochondrion inner membrane. It catalyses the reaction a ubiquinone + NADH + 5 H(+)(in) = a ubiquinol + NAD(+) + 4 H(+)(out). In terms of biological role, core subunit of the mitochondrial membrane respiratory chain NADH dehydrogenase (Complex I) that is believed to belong to the minimal assembly required for catalysis. Complex I functions in the transfer of electrons from NADH to the respiratory chain. The immediate electron acceptor for the enzyme is believed to be ubiquinone. This Rhizopus oryzae (Mucormycosis agent) protein is NADH-ubiquinone oxidoreductase chain 2.